Consider the following 136-residue polypeptide: Histone H3 (136 aa).

The segment at Met-1–Lys-43 is disordered. Lys-5 carries the N6,N6,N6-trimethyllysine; alternate modification. At Lys-5 the chain carries N6,N6-dimethyllysine; alternate. Lys-5 and Lys-10 each carry N6-methyllysine; alternate. An N6-acetyllysine; alternate modification is found at Lys-10. Position 11 is a phosphoserine (Ser-11). Lys-15 carries the N6,N6-dimethyllysine; alternate modification. Residues Lys-15, Lys-19, Lys-24, Lys-28, and Lys-37 each carry the N6-acetyllysine; alternate modification. 4 positions are modified to N6-methyllysine; alternate: Lys-19, Lys-24, Lys-28, and Lys-37. N6,N6,N6-trimethyllysine; alternate occurs at positions 28 and 37. N6,N6-dimethyllysine; alternate occurs at positions 28 and 37. N6-acetyllysine is present on residues Lys-57 and Lys-65. Lys-80 is modified (N6,N6,N6-trimethyllysine; alternate). Residue Lys-80 is modified to N6,N6-dimethyllysine; alternate. Lys-80 carries the post-translational modification N6-methyllysine; alternate.

This sequence belongs to the histone H3 family. The nucleosome is a histone octamer containing two molecules each of H2A, H2B, H3 and H4 assembled in one H3-H4 heterotetramer and two H2A-H2B heterodimers. The octamer wraps approximately 147 bp of DNA. Post-translationally, phosphorylated to form H3S10ph. H3S10ph promotes subsequent H3K14ac formation and is required for transcriptional activation through TBP recruitment to the promoters. In terms of processing, mono-, di- and trimethylated by the COMPASS complex to form H3K4me1/2/3. H3K4me activates gene expression by regulating transcription elongation and plays a role in telomere length maintenance. H3K4me enrichment correlates with transcription levels, and occurs in a 5' to 3' gradient with H3K4me3 enrichment at the 5'-end of genes, shifting to H3K4me2 and then H3K4me1. Methylated by SET2 to form H3K36me. H3K36me represses gene expression. Methylated by DOT1 to form H3K79me. H3K79me is required for association of SIR proteins with telomeric regions and for telomeric silencing. The COMPASS-mediated formation of H3K4me2/3 and the DOT1-mediated formation of H3K79me require H2BK123ub1. Acetylation of histone H3 leads to transcriptional activation. H3K14ac formation by GCN5 is promoted by H3S10ph. H3K14ac can also be formed by ESA1. H3K56ac formation occurs predominantly in newly synthesized H3 molecules during G1, S and G2/M of the cell cycle and may be involved in DNA repair.

It localises to the nucleus. The protein resides in the chromosome. In terms of biological role, core component of nucleosome. Nucleosomes wrap and compact DNA into chromatin, limiting DNA accessibility to the cellular machineries which require DNA as a template. Histones thereby play a central role in transcription regulation, DNA repair, DNA replication and chromosomal stability. DNA accessibility is regulated via a complex set of post-translational modifications of histones, also called histone code, and nucleosome remodeling. The protein is Histone H3 (HHT1) of Phaeosphaeria nodorum (strain SN15 / ATCC MYA-4574 / FGSC 10173) (Glume blotch fungus).